We begin with the raw amino-acid sequence, 364 residues long: N-acetyl-gamma-glutamyl-phosphate reductase (364 aa).

The active site involves cysteine 157.

The protein belongs to the NAGSA dehydrogenase family. Type 1 subfamily.

Its subcellular location is the cytoplasm. It carries out the reaction N-acetyl-L-glutamate 5-semialdehyde + phosphate + NADP(+) = N-acetyl-L-glutamyl 5-phosphate + NADPH + H(+). The protein operates within amino-acid biosynthesis; L-arginine biosynthesis; N(2)-acetyl-L-ornithine from L-glutamate: step 3/4. In terms of biological role, catalyzes the NADPH-dependent reduction of N-acetyl-5-glutamyl phosphate to yield N-acetyl-L-glutamate 5-semialdehyde. The chain is N-acetyl-gamma-glutamyl-phosphate reductase from Bifidobacterium animalis subsp. lactis (strain AD011).